We begin with the raw amino-acid sequence, 325 residues long: ADP-ribose glycohydrolase MACROD1 (325 aa).

N6-succinyllysine is present on residues K96, K103, and K129. K138 is covalently cross-linked (Glycyl lysine isopeptide (Lys-Gly) (interchain with G-Cter in SUMO2)). Positions 141-322 constitute a Macro domain; that stretch reads EPRYKKDKQL…IYRSRLPHYF (182 aa). Residue 159–161 participates in substrate binding; the sequence is SDI. K163 is modified (N6-acetyllysine). Substrate is bound by residues 172 to 174, 179 to 184, 267 to 273, and F306; these read AAN, GGGGVD, and ISTGVFG.

It belongs to the MacroD-type family. MacroD1/2-like subfamily. As to quaternary structure, interacts with ESR1; Interacts in a manner that is estrogen independent but is enhanced by estrogen. Interacts (via macro domain) with AR.

Its subcellular location is the nucleus. It carries out the reaction 3''-O-acetyl-ADP-D-ribose + H2O = ADP-D-ribose + acetate + H(+). The enzyme catalyses 2''-O-acetyl-ADP-D-ribose + H2O = ADP-D-ribose + acetate + H(+). It catalyses the reaction 4-O-(ADP-D-ribosyl)-L-aspartyl-[protein] + H2O = L-aspartyl-[protein] + ADP-D-ribose + H(+). The catalysed reaction is 5-O-(ADP-D-ribosyl)-L-glutamyl-[protein] + H2O = L-glutamyl-[protein] + ADP-D-ribose + H(+). It carries out the reaction alpha-NAD(+) + H2O = ADP-D-ribose + nicotinamide + H(+). Its activity is regulated as follows. Subject to competitive inhibition by the product ADP-ribose. Its function is as follows. Removes ADP-ribose from aspartate and glutamate residues in proteins bearing a single ADP-ribose moiety. Inactive towards proteins bearing poly-ADP-ribose. Deacetylates O-acetyl-ADP ribose, a signaling molecule generated by the deacetylation of acetylated lysine residues in histones and other proteins. Plays a role in estrogen signaling. Binds to androgen receptor (AR) and amplifies the transactivation function of AR in response to androgen. May play an important role in carcinogenesis and/or progression of hormone-dependent cancers by feed-forward mechanism that activates ESR1 transactivation. Could be an ESR1 coactivator, providing a positive feedback regulatory loop for ESR1 signal transduction. Could be involved in invasive growth by down-regulating CDH1 in endometrial cancer cells. Enhances ESR1-mediated transcription activity. The sequence is that of ADP-ribose glycohydrolase MACROD1 from Homo sapiens (Human).